Here is a 320-residue protein sequence, read N- to C-terminus: Ferrochelatase (320 aa).

Positions 194 and 275 each coordinate Fe cation.

This sequence belongs to the ferrochelatase family.

It is found in the cytoplasm. It catalyses the reaction heme b + 2 H(+) = protoporphyrin IX + Fe(2+). The protein operates within porphyrin-containing compound metabolism; protoheme biosynthesis; protoheme from protoporphyrin-IX: step 1/1. Functionally, catalyzes the ferrous insertion into protoporphyrin IX. The chain is Ferrochelatase from Enterobacter sp. (strain 638).